The following is a 1097-amino-acid chain: DNA-directed RNA polymerase subunit beta (1097 aa).

Residues 1072 to 1097 (QDVNPRRSTPSRPTYESLGVADYDED) form a disordered region.

The protein belongs to the RNA polymerase beta chain family. In terms of assembly, in cyanobacteria the RNAP catalytic core is composed of 2 alpha, 1 beta, 1 beta', 1 gamma and 1 omega subunit. When a sigma factor is associated with the core the holoenzyme is formed, which can initiate transcription.

The catalysed reaction is RNA(n) + a ribonucleoside 5'-triphosphate = RNA(n+1) + diphosphate. Functionally, DNA-dependent RNA polymerase catalyzes the transcription of DNA into RNA using the four ribonucleoside triphosphates as substrates. The chain is DNA-directed RNA polymerase subunit beta from Prochlorococcus marinus (strain MIT 9303).